The sequence spans 380 residues: Crotonobetainyl-CoA reductase (380 aa).

It belongs to the acyl-CoA dehydrogenase family. As to quaternary structure, homotetramer. FAD serves as cofactor.

The protein resides in the cytoplasm. It carries out the reaction 4-(trimethylamino)butanoyl-CoA + oxidized [electron-transfer flavoprotein] + H(+) = crotonobetainyl-CoA + reduced [electron-transfer flavoprotein]. It functions in the pathway amine and polyamine metabolism; carnitine metabolism. In terms of biological role, catalyzes the reduction of crotonobetainyl-CoA to gamma-butyrobetainyl-CoA. The chain is Crotonobetainyl-CoA reductase from Citrobacter koseri (strain ATCC BAA-895 / CDC 4225-83 / SGSC4696).